Reading from the N-terminus, the 206-residue chain is Small ribosomal subunit protein uS4c (206 aa).

In terms of domain architecture, S4 RNA-binding spans 94–152 (MRLDNIVFRLGMAPTIPAARQLVNHRHILVNDFTVNIPSYSCKLGDKISVQKRFESKTN).

The protein belongs to the universal ribosomal protein uS4 family. In terms of assembly, part of the 30S ribosomal subunit. Contacts protein S5. The interaction surface between S4 and S5 is involved in control of translational fidelity.

It localises to the plastid. The protein localises to the chloroplast. In terms of biological role, one of the primary rRNA binding proteins, it binds directly to 16S rRNA where it nucleates assembly of the body of the 30S subunit. Functionally, with S5 and S12 plays an important role in translational accuracy. In Chara vulgaris (Common stonewort), this protein is Small ribosomal subunit protein uS4c (rps4).